Reading from the N-terminus, the 65-residue chain is MARKFYVDQDECIACESCVEIAPGAFAMDPEIEKAYVKDVEGASQEEVEEAMDTCPVQCIHWEDE.

One can recognise a 4Fe-4S ferredoxin-type domain in the interval 3–31 (RKFYVDQDECIACESCVEIAPGAFAMDPE). [4Fe-4S] cluster contacts are provided by Cys12, Cys15, Cys18, and Cys55.

As to quaternary structure, homodimer. Requires [4Fe-4S] cluster as cofactor.

Its function is as follows. Ferredoxins are iron-sulfur proteins that transfer electrons in a wide variety of metabolic reactions. The protein is Ferredoxin-1 (fd1) of Desulfocurvibacter africanus (Desulfovibrio africanus).